We begin with the raw amino-acid sequence, 435 residues long: ATP-dependent protease ATPase subunit HslU (435 aa).

Residues Val18, 60-65, Asp248, Glu313, and Arg385 each bind ATP; that span reads GVGKTE.

It belongs to the ClpX chaperone family. HslU subfamily. In terms of assembly, a double ring-shaped homohexamer of HslV is capped on each side by a ring-shaped HslU homohexamer. The assembly of the HslU/HslV complex is dependent on binding of ATP.

The protein resides in the cytoplasm. Functionally, ATPase subunit of a proteasome-like degradation complex; this subunit has chaperone activity. The binding of ATP and its subsequent hydrolysis by HslU are essential for unfolding of protein substrates subsequently hydrolyzed by HslV. HslU recognizes the N-terminal part of its protein substrates and unfolds these before they are guided to HslV for hydrolysis. The polypeptide is ATP-dependent protease ATPase subunit HslU (Parvibaculum lavamentivorans (strain DS-1 / DSM 13023 / NCIMB 13966)).